A 219-amino-acid polypeptide reads, in one-letter code: ATP-dependent Clp protease proteolytic subunit (219 aa).

The interval 1–22 (MPVGVPKVPFLNPNPDPEPDSV) is disordered. The active-site Nucleophile is the serine 116. Histidine 141 is an active-site residue.

It belongs to the peptidase S14 family. As to quaternary structure, component of the chloroplastic Clp protease core complex.

The protein localises to the plastid. The protein resides in the chloroplast stroma. The catalysed reaction is Hydrolysis of proteins to small peptides in the presence of ATP and magnesium. alpha-casein is the usual test substrate. In the absence of ATP, only oligopeptides shorter than five residues are hydrolyzed (such as succinyl-Leu-Tyr-|-NHMec, and Leu-Tyr-Leu-|-Tyr-Trp, in which cleavage of the -Tyr-|-Leu- and -Tyr-|-Trp bonds also occurs).. Its function is as follows. Cleaves peptides in various proteins in a process that requires ATP hydrolysis. Has a chymotrypsin-like activity. Plays a major role in the degradation of misfolded proteins. This is ATP-dependent Clp protease proteolytic subunit from Pelargonium hortorum (Common geranium).